Reading from the N-terminus, the 480-residue chain is LETM1 domain-containing protein LETM2, mitochondrial (480 aa).

The N-terminal 25 residues, 1–25 (MAFYSYNSFLAIFWTRLPGHSVYPS), are a transit peptide targeting the mitochondrion. The Mitochondrial intermembrane portion of the chain corresponds to 26–175 (CSHFPSLAFL…LLRTCADVFR (150 aa)). Positions 88–118 (GKPQLEQTGKPKAASPQPTKEAKTETTEEKR) are disordered. Residues 107 to 118 (KEAKTETTEEKR) show a composition bias toward basic and acidic residues. A helical membrane pass occupies residues 176–196 (LVPFMVFIIVPFMEFLIPVFL). At 197–480 (KLFPDMLPST…QNSKADSKGA (284 aa)) the chain is on the mitochondrial matrix side. In terms of domain architecture, Letm1 RBD spans 219–436 (KTMAAKLEIA…SAPQLKGTKD (218 aa)). The interval 398–444 (ELPPNIETPKPNLGIPTPPPPESKENLTDSAPQLKGTKDEEFIQLPP) is disordered.

It localises to the mitochondrion inner membrane. The chain is LETM1 domain-containing protein LETM2, mitochondrial (Letm2) from Mus musculus (Mouse).